Here is a 163-residue protein sequence, read N- to C-terminus: NADH-quinone oxidoreductase subunit I (163 aa).

4Fe-4S ferredoxin-type domains lie at L54–D84 and T94–I123. C64, C67, C70, C74, C103, C106, C109, and C113 together coordinate [4Fe-4S] cluster.

It belongs to the complex I 23 kDa subunit family. In terms of assembly, NDH-1 is composed of 14 different subunits. Subunits NuoA, H, J, K, L, M, N constitute the membrane sector of the complex. [4Fe-4S] cluster is required as a cofactor.

It is found in the cell inner membrane. It catalyses the reaction a quinone + NADH + 5 H(+)(in) = a quinol + NAD(+) + 4 H(+)(out). Its function is as follows. NDH-1 shuttles electrons from NADH, via FMN and iron-sulfur (Fe-S) centers, to quinones in the respiratory chain. The immediate electron acceptor for the enzyme in this species is believed to be ubiquinone. Couples the redox reaction to proton translocation (for every two electrons transferred, four hydrogen ions are translocated across the cytoplasmic membrane), and thus conserves the redox energy in a proton gradient. This Cupriavidus metallidurans (strain ATCC 43123 / DSM 2839 / NBRC 102507 / CH34) (Ralstonia metallidurans) protein is NADH-quinone oxidoreductase subunit I.